Reading from the N-terminus, the 388-residue chain is 3-oxo-tetronate kinase (388 aa).

Residues Ser258 and 360–363 (GGET) each bind ATP.

The protein belongs to the four-carbon acid sugar kinase family.

It carries out the reaction 3-dehydro-L-erythronate + ATP = 3-dehydro-4-O-phospho-L-erythronate + ADP + H(+). The catalysed reaction is 3-dehydro-D-erythronate + ATP = 3-dehydro-4-O-phospho-D-erythronate + ADP + H(+). In terms of biological role, catalyzes the ATP-dependent phosphorylation of 3-oxo-tetronate to 3-oxo-tetronate 4-phosphate. The polypeptide is 3-oxo-tetronate kinase (Escherichia coli (strain K12)).